The following is a 180-amino-acid chain: Putative manganese efflux pump MntP (180 aa).

The next 6 helical transmembrane spans lie at 6-26 (LFAL…GIGI), 34-54 (IALI…LGWY), 67-87 (ASIA…WDTI), 103-123 (GGLL…GFTL), 130-150 (LVLA…AGLT), and 159-179 (IGER…VKLF).

Belongs to the MntP (TC 9.B.29) family.

It is found in the cell membrane. Probably functions as a manganese efflux pump. The chain is Putative manganese efflux pump MntP from Desulforamulus reducens (strain ATCC BAA-1160 / DSM 100696 / MI-1) (Desulfotomaculum reducens).